A 359-amino-acid polypeptide reads, in one-letter code: MLKELFVNLTILITFNYLFTHLFKERLVHKKDSISFQAVKGLACGLLGVILMVFGFTYQHSIIDLRNIPIMIAALYGGWVSTATALAMITAGRLLITMNTSALYSVIIICIAAIPSLIVSRRKKVQLKHAFYLLIITNSLISFSFYFLIDLHSYELHLYFWIISIAGGMLSLYIIDHETNAHLLFKQYKFQAHFDFLTGVYNRRKFEETTKALYQQAADTPHFQFALIYMDIDHFKTINDQYGHHEGDQVLKELGLRLKQTIRNTDPAARIGGEEFAVLLPNCSLDKAARIAERIRSTVSDAPIVLTNGDELSVTISLGAAHYPNNTEQPGSLPILADQMLYKAKETGRNRVCFSEKKE.

A run of 6 helical transmembrane segments spans residues 4–24, 36–56, 68–88, 94–114, 129–149, and 155–175; these read ELFV…HLFK, FQAV…VFGF, IPIM…ALAM, LLIT…IAAI, HAFY…YFLI, and ELHL…LYII. The GGDEF domain occupies 223–357; the sequence is FQFALIYMDI…GRNRVCFSEK (135 aa).

It is found in the cell membrane. This is an uncharacterized protein from Bacillus subtilis (strain 168).